A 298-amino-acid chain; its full sequence is MIYFIFLQVVMVLVSVAFLTLLERKILGYIQLRKGPNKVGFLGILQPFSDGVKLFCKEVSLPLVSNFMPYLVAPVFSLFLSFFLWTLVPFISYGAKFNLSFLLVICAMSVSVYSIMVAGWSSNSKYSLLGSIRAGAQTISYEVSLIIIILSPLMLFKKLDLEGYLVKSSYVGWPLYLCLPLGLCWFTTILAETNRTPFDLAEGESELVSGFNTEYMGVGFALIMLSEYASILFMSLLFSVVFGSMSFLMFCLVVYSYLWSRGSYPRYRYDNLMHLCWKSLLPTSLMFLCFYWSLSQGG.

The next 7 helical transmembrane spans lie at 2–22 (IYFIFLQVVMVLVSVAFLTLL), 71–91 (LVAPVFSLFLSFFLWTLVPFI), 99–119 (LSFLLVICAMSVSVYSIMVAG), 136–156 (AQTISYEVSLIIIILSPLMLF), 171–191 (VGWPLYLCLPLGLCWFTTILA), 231–251 (ILFMSLLFSVVFGSMSFLMFC), and 272–292 (LMHLCWKSLLPTSLMFLCFYW).

It belongs to the complex I subunit 1 family.

The protein resides in the mitochondrion inner membrane. It catalyses the reaction a ubiquinone + NADH + 5 H(+)(in) = a ubiquinol + NAD(+) + 4 H(+)(out). In terms of biological role, core subunit of the mitochondrial membrane respiratory chain NADH dehydrogenase (Complex I) that is believed to belong to the minimal assembly required for catalysis. Complex I functions in the transfer of electrons from NADH to the respiratory chain. The immediate electron acceptor for the enzyme is believed to be ubiquinone. In Artemia franciscana (Brine shrimp), this protein is NADH-ubiquinone oxidoreductase chain 1 (ND1).